The primary structure comprises 125 residues: uncharacterized protein (125 aa).

The N-terminal stretch at 1–21 is a signal peptide; that stretch reads MIRNIIITISAILLLTSKGFA. A coiled-coil region spans residues 54–102; that stretch reads KPEIREEIQKYRVEIVNINKKKRELYDKLSKEAQNFLAKEQEYKQRLSS. The tract at residues 96 to 125 is disordered; sequence YKQRLSSSSMATEDSKDNNTAKDNKDADKK. Residues 108-125 show a composition bias toward basic and acidic residues; sequence EDSKDNNTAKDNKDADKK.

This is an uncharacterized protein from Rickettsia bellii (strain RML369-C).